The primary structure comprises 138 residues: uncharacterized protein (138 aa).

This is an uncharacterized protein from Homo sapiens (Human).